A 320-amino-acid polypeptide reads, in one-letter code: UDP-3-O-acyl-N-acetylglucosamine deacetylase (320 aa).

The Zn(2+) site is built by histidine 92, histidine 251, and aspartate 255. Catalysis depends on histidine 278, which acts as the Proton donor.

This sequence belongs to the LpxC family. Zn(2+) is required as a cofactor.

It carries out the reaction a UDP-3-O-[(3R)-3-hydroxyacyl]-N-acetyl-alpha-D-glucosamine + H2O = a UDP-3-O-[(3R)-3-hydroxyacyl]-alpha-D-glucosamine + acetate. Its pathway is glycolipid biosynthesis; lipid IV(A) biosynthesis; lipid IV(A) from (3R)-3-hydroxytetradecanoyl-[acyl-carrier-protein] and UDP-N-acetyl-alpha-D-glucosamine: step 2/6. Its function is as follows. Catalyzes the hydrolysis of UDP-3-O-myristoyl-N-acetylglucosamine to form UDP-3-O-myristoylglucosamine and acetate, the committed step in lipid A biosynthesis. The sequence is that of UDP-3-O-acyl-N-acetylglucosamine deacetylase from Psychrobacter cryohalolentis (strain ATCC BAA-1226 / DSM 17306 / VKM B-2378 / K5).